We begin with the raw amino-acid sequence, 352 residues long: Ion-translocating oxidoreductase complex subunit D (352 aa).

Transmembrane regions (helical) follow at residues 20 to 40 (IMLL…WFFG), 42 to 62 (GTLV…ALVL), 89 to 109 (IPPL…AIIA), and 123 to 143 (PAMI…TSWL). An FMN phosphoryl threonine modification is found at T187. Transmembrane regions (helical) follow at residues 214–234 (ILAG…GLWL), 242–262 (WHIP…GWLF), 267–287 (LAAP…FFIL), 301–321 (LIFG…GGYP), and 322–342 (DGVA…DYYT).

It belongs to the NqrB/RnfD family. As to quaternary structure, the complex is composed of six subunits: RsxA, RsxB, RsxC, RsxD, RsxE and RsxG. FMN is required as a cofactor.

It localises to the cell inner membrane. In terms of biological role, part of a membrane-bound complex that couples electron transfer with translocation of ions across the membrane. Required to maintain the reduced state of SoxR. This is Ion-translocating oxidoreductase complex subunit D from Escherichia coli (strain ATCC 8739 / DSM 1576 / NBRC 3972 / NCIMB 8545 / WDCM 00012 / Crooks).